Reading from the N-terminus, the 193-residue chain is MKLLIQGNNIAVTESIHDYVESKLEKATKHFQTFATKVDVHLSVANNARITDKHKAEVTVYANGTVIRAQEGSENLYASIDLVSDKIARQLRKYKEKNFGKKTHVQEKTSEVLPEDPVPDNLIGDRAPELPSEVVRMKYFAMPPMTIDEALEQLQLVDHDFYMFLNKDTNAINVIYIRNHGGYGVIQPRLGKE.

This sequence belongs to the HPF/YfiA ribosome-associated protein family. Long HPF subfamily. Interacts with 100S ribosomes.

It localises to the cytoplasm. In terms of biological role, might modulate either transcription and/or translation. Functionally, required for dimerization of active 70S ribosomes into 100S ribosomes in stationary phase; 100S ribosomes are translationally inactive and sometimes present during exponential growth. This chain is Ribosome hibernation promotion factor, found in Picosynechococcus sp. (strain ATCC 27264 / PCC 7002 / PR-6) (Agmenellum quadruplicatum).